The following is a 171-amino-acid chain: Shikimate kinase (171 aa).

Position 14–19 (14–19) interacts with ATP; it reads GAGKST. A Mg(2+)-binding site is contributed by S18. D36, R60, and G82 together coordinate substrate. An ATP-binding site is contributed by R120. Substrate is bound at residue R139. Residue Q156 participates in ATP binding.

The protein belongs to the shikimate kinase family. Monomer. Mg(2+) is required as a cofactor.

The protein resides in the cytoplasm. It carries out the reaction shikimate + ATP = 3-phosphoshikimate + ADP + H(+). Its pathway is metabolic intermediate biosynthesis; chorismate biosynthesis; chorismate from D-erythrose 4-phosphate and phosphoenolpyruvate: step 5/7. In terms of biological role, catalyzes the specific phosphorylation of the 3-hydroxyl group of shikimic acid using ATP as a cosubstrate. The sequence is that of Shikimate kinase from Shewanella pealeana (strain ATCC 700345 / ANG-SQ1).